A 225-amino-acid polypeptide reads, in one-letter code: Ribonuclease 3 (225 aa).

In terms of domain architecture, RNase III spans 5-127; the sequence is LDRLQRSLGH…VFAATFLDQG (123 aa). Residue E40 participates in Mg(2+) binding. Residue D44 is part of the active site. D113 and E116 together coordinate Mg(2+). E116 is a catalytic residue. The 71-residue stretch at 154–224 folds into the DRBM domain; the sequence is DPKTALQELL…AELALAQLRK (71 aa).

The protein belongs to the ribonuclease III family. Homodimer. Mg(2+) is required as a cofactor.

Its subcellular location is the cytoplasm. The enzyme catalyses Endonucleolytic cleavage to 5'-phosphomonoester.. Its function is as follows. Digests double-stranded RNA. Involved in the processing of primary rRNA transcript to yield the immediate precursors to the large and small rRNAs (23S and 16S). Processes some mRNAs, and tRNAs when they are encoded in the rRNA operon. Processes pre-crRNA and tracrRNA of type II CRISPR loci if present in the organism. In Aromatoleum aromaticum (strain DSM 19018 / LMG 30748 / EbN1) (Azoarcus sp. (strain EbN1)), this protein is Ribonuclease 3.